The following is a 390-amino-acid chain: Trehalose-phosphate phosphatase (390 aa).

The active-site Nucleophile is aspartate 150. Residues aspartate 150, aspartate 152, and aspartate 333 each coordinate Mg(2+). Residue 150 to 152 (DFD) coordinates substrate.

The protein belongs to the trehalose phosphatase family. Mg(2+) is required as a cofactor.

The enzyme catalyses alpha,alpha-trehalose 6-phosphate + H2O = alpha,alpha-trehalose + phosphate. It functions in the pathway glycan biosynthesis; trehalose biosynthesis. Its function is as follows. Removes the phosphate from trehalose 6-phosphate to produce free trehalose. The polypeptide is Trehalose-phosphate phosphatase (otsB) (Mycobacterium ulcerans (strain Agy99)).